The primary structure comprises 465 residues: Sodium-coupled neutral amino acid transporter 7 (465 aa).

The next 11 membrane-spanning stretches (helical) occupy residues 54–74, 82–102, 128–148, 177–197, 204–224, 244–264, 275–295, 318–338, 370–390, 394–414, and 427–447; these read AVFI…PAAF, AGVT…VILA, ICEL…LIII, FTIT…KEIG, TLSV…YIWP, FNAM…VPVF, WWGV…GTGV, VAVA…YPIL, ILQT…IPDI, ISLI…LCLI, and SWNA…FIFG.

This sequence belongs to the amino acid/polyamine transporter 2 family.

Its subcellular location is the lysosome membrane. It is found in the cell projection. The protein resides in the axon. The enzyme catalyses L-asparagine(in) + Na(+)(in) = L-asparagine(out) + Na(+)(out). The catalysed reaction is L-glutamine(in) + Na(+)(in) = L-glutamine(out) + Na(+)(out). In terms of biological role, symporter that selectively cotransports sodium ions and amino acids, such as L-glutamine and L-asparagine from the lysosome into the cytoplasm and may participates in mTORC1 activation. The transport activity requires an acidic lysosomal lumen. The protein is Sodium-coupled neutral amino acid transporter 7 of Danio rerio (Zebrafish).